A 314-amino-acid chain; its full sequence is DNA-directed RNA polymerase subunit alpha (314 aa).

Residues 1–228 (MIEIEKPKIE…EHLNIFVGLT (228 aa)) are alpha N-terminal domain (alpha-NTD). The segment at 245–314 (KEKVLEMTIE…ELGLGLRKDD (70 aa)) is alpha C-terminal domain (alpha-CTD).

The protein belongs to the RNA polymerase alpha chain family. As to quaternary structure, homodimer. RNAP is composed of a core of 2 alpha, a beta and a beta' subunit. The core is associated with a delta subunit, and at least one of epsilon or omega. When a sigma factor is associated with the core the holoenzyme is formed, which can initiate transcription.

It catalyses the reaction RNA(n) + a ribonucleoside 5'-triphosphate = RNA(n+1) + diphosphate. Its function is as follows. DNA-dependent RNA polymerase catalyzes the transcription of DNA into RNA using the four ribonucleoside triphosphates as substrates. The polypeptide is DNA-directed RNA polymerase subunit alpha (Bacillus subtilis (strain 168)).